A 146-amino-acid polypeptide reads, in one-letter code: Large ribosomal subunit protein uL15 (146 aa).

2 stretches are compositionally biased toward basic residues: residues 1–13 (MIRKRRKITRMRG) and 22–38 (SKKRRGAGHRGGRGQAG). Positions 1–38 (MIRKRRKITRMRGSRTVGGGCSKKRRGAGHRGGRGQAG) are disordered.

The protein belongs to the universal ribosomal protein uL15 family. As to quaternary structure, part of the 50S ribosomal subunit.

In terms of biological role, binds to the 23S rRNA. This Methanothermobacter thermautotrophicus (strain ATCC 29096 / DSM 1053 / JCM 10044 / NBRC 100330 / Delta H) (Methanobacterium thermoautotrophicum) protein is Large ribosomal subunit protein uL15.